A 409-amino-acid polypeptide reads, in one-letter code: 5-aminolevulinate synthase (409 aa).

Residues Arg-21, Ser-137, and Lys-156 each contribute to the succinyl-CoA site. Residues Ser-189, His-217, and Thr-245 each coordinate pyridoxal 5'-phosphate. The active site involves Lys-248. Lys-248 is subject to N6-(pyridoxal phosphate)lysine. 2 residues coordinate pyridoxal 5'-phosphate: Ser-277 and Thr-278. Residue Thr-365 participates in succinyl-CoA binding.

This sequence belongs to the class-II pyridoxal-phosphate-dependent aminotransferase family. In terms of assembly, homodimer. It depends on pyridoxal 5'-phosphate as a cofactor.

It catalyses the reaction succinyl-CoA + glycine + H(+) = 5-aminolevulinate + CO2 + CoA. Its pathway is porphyrin-containing compound metabolism; protoporphyrin-IX biosynthesis; 5-aminolevulinate from glycine: step 1/1. The polypeptide is 5-aminolevulinate synthase (hemA) (Rhodobacter capsulatus (strain ATCC BAA-309 / NBRC 16581 / SB1003)).